We begin with the raw amino-acid sequence, 89 residues long: Small ribosomal subunit protein uS17 (89 aa).

It belongs to the universal ribosomal protein uS17 family. Part of the 30S ribosomal subunit.

One of the primary rRNA binding proteins, it binds specifically to the 5'-end of 16S ribosomal RNA. The sequence is that of Small ribosomal subunit protein uS17 from Coxiella burnetii (strain RSA 331 / Henzerling II).